The chain runs to 640 residues: MVPAGLCAYRDLRRKRARKWGDTVTQPDDPRRVGVIVELIDHTIAIAKLNERGDLVQRLTRARQRITDPQVRVVIAGLLKQGKSQLLNSLLNLPAARVGDDEATVVITVVSYSAQPSARLVLAAGPDGTTAAVDIPVDDISTDVRRAPHAGGREVLRVEVGAPSPLLRGGLAFIDTPGVGGLGQPHLSATLGLLPEADAVLVVSDTSQEFTEPEMWFVRQAHQICPVGAVVATKTDLYPRWREIVNANAAHLQRARVPMPIIAVSSLLRSHAVTLNDKELNEESNFPAIVKFLSEQVLSRATERVRAGVLGEIRSATEQLAVSLGSELSVVNDPNLRDRLASDLERRKREAQQAVQQTALWQQVLGDGFNDLTADVDHDLRTRFRTVTEDAERQIDSCDPTAHWAEIGNDVENAIATAVGDNFVWAYQRSEALADDVARSFADAGLDSVLSAELSPHVMGTDFGRLKALGRMESKPLRRGHKMIIGMRGSYGGVVMIGMLSSVVGLGLFNPLSVGAGLILGRMAYKEDKQNRLLRVRSEAKANVRRFVDDISFVVSKQSRDRLKMIQRLLRDHYREIAEEITRSLTESLQATIAAAQVAETERDNRIRELQRQLGILSQVNDNLAGLEPTLTPRASLGRA.

A helical membrane pass occupies residues 497-519; the sequence is IGMLSSVVGLGLFNPLSVGAGLI. A coiled-coil region spans residues 560-628; the sequence is RDRLKMIQRL…QVNDNLAGLE (69 aa).

As to quaternary structure, forms multimeric structures containing a central pore.

It localises to the cell membrane. Its function is as follows. Participates in the development of tolerance to both isoniazid and ethambutol. May function through a MDR-pump like mechanism, although it does not appear to directly transport isoniazid from the cell. The chain is Isoniazid-induced protein IniA (iniA) from Mycobacterium tuberculosis (strain CDC 1551 / Oshkosh).